The following is a 298-amino-acid chain: Type II methyltransferase M.MjaIV (298 aa).

It carries out the reaction a 2'-deoxyadenosine in DNA + S-adenosyl-L-methionine = an N(6)-methyl-2'-deoxyadenosine in DNA + S-adenosyl-L-homocysteine + H(+). In terms of biological role, a methylase that recognizes the double-stranded sequence 5'-GTNNAC-3', methylates A-5 on both strands, and protects the DNA from cleavage by the MjaIV endonuclease. The protein is Type II methyltransferase M.MjaIV (mjaIVMP) of Methanocaldococcus jannaschii (strain ATCC 43067 / DSM 2661 / JAL-1 / JCM 10045 / NBRC 100440) (Methanococcus jannaschii).